The primary structure comprises 319 residues: tRNA uridine(34) hydroxylase (319 aa).

Residues Lys127 to Glu221 enclose the Rhodanese domain. Cys181 (cysteine persulfide intermediate) is an active-site residue.

This sequence belongs to the TrhO family.

The enzyme catalyses uridine(34) in tRNA + AH2 + O2 = 5-hydroxyuridine(34) in tRNA + A + H2O. Functionally, catalyzes oxygen-dependent 5-hydroxyuridine (ho5U) modification at position 34 in tRNAs. The sequence is that of tRNA uridine(34) hydroxylase from Bacillus cereus (strain B4264).